We begin with the raw amino-acid sequence, 188 residues long: MSKAGASLATCYGPVSTHVMTKAENIRLLILDVDGVLSDGLIYMGNNGEELKAFNVRDGYGIRCALTSNIEVAIITGRKAKLVEDRCATLGIVHLYQGQSNKLIAFSDLLEKLAIAPENVAYVGDDLIDWPVMEKVGLSVAVADAHPLLIPRADYVTHIAGGRGAVREVCDLLLLAQGKLDEAKGQSI.

The Mg(2+) site is built by D32 and D34. Residues D34, 55 to 59 (NVRDG), R63, R78, R86, and K102 each bind substrate. Residue D125 coordinates Mg(2+).

The protein belongs to the KdsC family. Homotetramer. Mg(2+) serves as cofactor.

It catalyses the reaction 3-deoxy-alpha-D-manno-2-octulosonate-8-phosphate + H2O = 3-deoxy-alpha-D-manno-oct-2-ulosonate + phosphate. The protein operates within carbohydrate biosynthesis; 3-deoxy-D-manno-octulosonate biosynthesis; 3-deoxy-D-manno-octulosonate from D-ribulose 5-phosphate: step 3/3. It functions in the pathway bacterial outer membrane biogenesis; lipopolysaccharide biosynthesis. In terms of biological role, catalyzes the hydrolysis of 3-deoxy-D-manno-octulosonate 8-phosphate (KDO 8-P) to 3-deoxy-D-manno-octulosonate (KDO) and inorganic phosphate in vitro. Also catalyzes the dephosphorylation of phospho-tyrosine in vitro. The sequence is that of 3-deoxy-D-manno-octulosonate 8-phosphate phosphatase KdsC (kdsC) from Salmonella typhi.